The following is a 489-amino-acid chain: Ataxin-10 homolog (489 aa).

Belongs to the ataxin-10 family.

The protein localises to the cytoplasm. In terms of biological role, may play a role in the regulation of cytokinesis. The chain is Ataxin-10 homolog (CTR86) from Debaryomyces hansenii (strain ATCC 36239 / CBS 767 / BCRC 21394 / JCM 1990 / NBRC 0083 / IGC 2968) (Yeast).